We begin with the raw amino-acid sequence, 571 residues long: L-erythrulose 1-kinase (571 aa).

The DhaK domain occupies 7-331; it reads SPDDFADEAV…WTAPVETPAY (325 aa). Residue His-217 is the Tele-hemiaminal-histidine intermediate of the active site. The region spanning 367–567 is the DhaL domain; it reads RNIVAVLETF…FAMLMKALGE (201 aa). ATP is bound by residues 396-402, 442-443, Gly-484, Arg-539, and 552-554; these read DGDHGQG, TS, and DPG.

The enzyme catalyses L-erythrulose + ATP = L-erythrulose 1-phosphate + ADP + H(+). It functions in the pathway carbohydrate metabolism; L-threitol degradation. In terms of biological role, kinase that has a preference for L-erythrulose, producing L-erythrulose-1P. Involved in the degradation pathway of L-threitol, that allows M.smegmatis to grow on this compound as the sole carbon source. Is also able to phosphorylate D-erythrulose and dihydroxyacetone in vitro. The protein is L-erythrulose 1-kinase of Mycolicibacterium smegmatis (strain ATCC 700084 / mc(2)155) (Mycobacterium smegmatis).